The primary structure comprises 466 residues: ATP synthase subunit beta (466 aa).

153–160 (GGAGVGKT) serves as a coordination point for ATP.

It belongs to the ATPase alpha/beta chains family. F-type ATPases have 2 components, CF(1) - the catalytic core - and CF(0) - the membrane proton channel. CF(1) has five subunits: alpha(3), beta(3), gamma(1), delta(1), epsilon(1). CF(0) has three main subunits: a(1), b(2) and c(9-12). The alpha and beta chains form an alternating ring which encloses part of the gamma chain. CF(1) is attached to CF(0) by a central stalk formed by the gamma and epsilon chains, while a peripheral stalk is formed by the delta and b chains.

The protein localises to the cell membrane. The enzyme catalyses ATP + H2O + 4 H(+)(in) = ADP + phosphate + 5 H(+)(out). Functionally, produces ATP from ADP in the presence of a proton gradient across the membrane. The catalytic sites are hosted primarily by the beta subunits. The protein is ATP synthase subunit beta of Clostridium acetobutylicum (strain ATCC 824 / DSM 792 / JCM 1419 / IAM 19013 / LMG 5710 / NBRC 13948 / NRRL B-527 / VKM B-1787 / 2291 / W).